Reading from the N-terminus, the 1295-residue chain is Phosphoribosylformylglycinamidine synthase (1295 aa).

The tract at residues 305 to 327 (WPGAATGSGGEIRDEGATGRGAK) is disordered. ATP is bound by residues 307–318 (GAATGSGGEIRD) and alanine 678. Positions 718, 722, and 884 each coordinate Mg(2+). Serine 886 contributes to the ATP binding site. The 254-residue stretch at 1042 to 1295 (VAVLREQGVN…IFRNARKQLG (254 aa)) folds into the Glutamine amidotransferase type-1 domain. The active-site Nucleophile is cysteine 1135. Catalysis depends on residues histidine 1260 and glutamate 1262.

This sequence in the N-terminal section; belongs to the FGAMS family. Monomer. Post-translationally, both N-terminus methionine truncation and retention have been observed for this protein.

The protein resides in the cytoplasm. It carries out the reaction N(2)-formyl-N(1)-(5-phospho-beta-D-ribosyl)glycinamide + L-glutamine + ATP + H2O = 2-formamido-N(1)-(5-O-phospho-beta-D-ribosyl)acetamidine + L-glutamate + ADP + phosphate + H(+). The protein operates within purine metabolism; IMP biosynthesis via de novo pathway; 5-amino-1-(5-phospho-D-ribosyl)imidazole from N(2)-formyl-N(1)-(5-phospho-D-ribosyl)glycinamide: step 1/2. Its function is as follows. Phosphoribosylformylglycinamidine synthase involved in the purines biosynthetic pathway. Catalyzes the ATP-dependent conversion of formylglycinamide ribonucleotide (FGAR) and glutamine to yield formylglycinamidine ribonucleotide (FGAM) and glutamate. This chain is Phosphoribosylformylglycinamidine synthase, found in Escherichia coli (strain K12).